We begin with the raw amino-acid sequence, 366 residues long: UDP-N-acetylglucosamine--N-acetylmuramyl-(pentapeptide) pyrophosphoryl-undecaprenol N-acetylglucosamine transferase (366 aa).

UDP-N-acetyl-alpha-D-glucosamine is bound by residues 10–12 (TGG), Asn-124, Ser-195, and Gln-295.

This sequence belongs to the glycosyltransferase 28 family. MurG subfamily.

Its subcellular location is the cell membrane. The catalysed reaction is di-trans,octa-cis-undecaprenyl diphospho-N-acetyl-alpha-D-muramoyl-L-alanyl-D-glutamyl-meso-2,6-diaminopimeloyl-D-alanyl-D-alanine + UDP-N-acetyl-alpha-D-glucosamine = di-trans,octa-cis-undecaprenyl diphospho-[N-acetyl-alpha-D-glucosaminyl-(1-&gt;4)]-N-acetyl-alpha-D-muramoyl-L-alanyl-D-glutamyl-meso-2,6-diaminopimeloyl-D-alanyl-D-alanine + UDP + H(+). The protein operates within cell wall biogenesis; peptidoglycan biosynthesis. In terms of biological role, cell wall formation. Catalyzes the transfer of a GlcNAc subunit on undecaprenyl-pyrophosphoryl-MurNAc-pentapeptide (lipid intermediate I) to form undecaprenyl-pyrophosphoryl-MurNAc-(pentapeptide)GlcNAc (lipid intermediate II). The polypeptide is UDP-N-acetylglucosamine--N-acetylmuramyl-(pentapeptide) pyrophosphoryl-undecaprenol N-acetylglucosamine transferase (Bacillus licheniformis (strain ATCC 14580 / DSM 13 / JCM 2505 / CCUG 7422 / NBRC 12200 / NCIMB 9375 / NCTC 10341 / NRRL NRS-1264 / Gibson 46)).